A 233-amino-acid chain; its full sequence is Large ribosomal subunit protein uL1 (233 aa).

This sequence belongs to the universal ribosomal protein uL1 family. In terms of assembly, part of the 50S ribosomal subunit.

Binds directly to 23S rRNA. The L1 stalk is quite mobile in the ribosome, and is involved in E site tRNA release. In terms of biological role, protein L1 is also a translational repressor protein, it controls the translation of the L11 operon by binding to its mRNA. This Brucella melitensis biotype 1 (strain ATCC 23456 / CCUG 17765 / NCTC 10094 / 16M) protein is Large ribosomal subunit protein uL1.